We begin with the raw amino-acid sequence, 528 residues long: O-methylsterigmatocystin oxidoreductase (528 aa).

C440 contacts heme.

It belongs to the cytochrome P450 family. It depends on heme as a cofactor.

The enzyme catalyses 8-O-methylsterigmatocystin + 2 reduced [NADPH--hemoprotein reductase] + 2 O2 = aflatoxin B1 + methanol + 2 oxidized [NADPH--hemoprotein reductase] + CO2 + H2O + 2 H(+). It catalyses the reaction 8-O-methyldihydrosterigmatocystin + 2 reduced [NADPH--hemoprotein reductase] + 2 O2 = aflatoxin B2 + methanol + 2 oxidized [NADPH--hemoprotein reductase] + CO2 + H2O + 2 H(+). It participates in mycotoxin biosynthesis; aflatoxin biosynthesis. Its function is as follows. Converts O-methylsterigmatocystin (OMST) to aflatoxin B1 and converts dihydro-O-methylsterigmatocystin (DHOMST) to aflatoxin B2 in the aflatoxin biosynthesis pathway. The polypeptide is O-methylsterigmatocystin oxidoreductase (ordA) (Aspergillus flavus).